The following is a 158-amino-acid chain: Cyclic pyranopterin monophosphate synthase (158 aa).

Substrate is bound by residues 75-77 (LCH) and 113-114 (ME). Aspartate 128 is an active-site residue.

The protein belongs to the MoaC family. Homohexamer; trimer of dimers.

The enzyme catalyses (8S)-3',8-cyclo-7,8-dihydroguanosine 5'-triphosphate = cyclic pyranopterin phosphate + diphosphate. Its pathway is cofactor biosynthesis; molybdopterin biosynthesis. Its function is as follows. Catalyzes the conversion of (8S)-3',8-cyclo-7,8-dihydroguanosine 5'-triphosphate to cyclic pyranopterin monophosphate (cPMP). The sequence is that of Cyclic pyranopterin monophosphate synthase from Paraburkholderia xenovorans (strain LB400).